Here is a 402-residue protein sequence, read N- to C-terminus: Protein arginine methyltransferase NDUFAF7 homolog, mitochondrial (402 aa).

It belongs to the NDUFAF7 family.

It localises to the mitochondrion. It carries out the reaction L-arginyl-[protein] + 2 S-adenosyl-L-methionine = N(omega),N(omega)'-dimethyl-L-arginyl-[protein] + 2 S-adenosyl-L-homocysteine + 2 H(+). Arginine methyltransferase involved in the assembly or stability of mitochondrial NADH:ubiquinone oxidoreductase complex (complex I). The sequence is that of Protein arginine methyltransferase NDUFAF7 homolog, mitochondrial from Saccharomyces cerevisiae (strain ATCC 204508 / S288c) (Baker's yeast).